The sequence spans 61 residues: Small ribosomal subunit protein uS14 (61 aa).

The Zn(2+) site is built by Cys-24, Cys-27, Cys-40, and Cys-43.

The protein belongs to the universal ribosomal protein uS14 family. Zinc-binding uS14 subfamily. Part of the 30S ribosomal subunit. Contacts proteins S3 and S10. Requires Zn(2+) as cofactor.

Functionally, binds 16S rRNA, required for the assembly of 30S particles and may also be responsible for determining the conformation of the 16S rRNA at the A site. This chain is Small ribosomal subunit protein uS14, found in Leptospira biflexa serovar Patoc (strain Patoc 1 / Ames).